Reading from the N-terminus, the 412-residue chain is L-cysteine:1D-myo-inositol 2-amino-2-deoxy-alpha-D-glucopyranoside ligase (412 aa).

Position 43 (C43) interacts with Zn(2+). L-cysteinyl-5'-AMP-binding positions include 43 to 46, T58, and 81 to 83; these read CGIT and NVT. Residues 45 to 55 carry the 'HIGH' region motif; the sequence is ITPYDATHLGH. Positions 186–191 match the 'ERGGDP' region motif; sequence ERGGDP. W227 contributes to the L-cysteinyl-5'-AMP binding site. A Zn(2+)-binding site is contributed by C231. 249–251 is a binding site for L-cysteinyl-5'-AMP; sequence GND. H256 is a binding site for Zn(2+). I283 provides a ligand contact to L-cysteinyl-5'-AMP. A 'KMSKS' region motif is present at residues 289 to 293; the sequence is KMSKS.

The protein belongs to the class-I aminoacyl-tRNA synthetase family. MshC subfamily. As to quaternary structure, monomer. Zn(2+) is required as a cofactor.

It carries out the reaction 1D-myo-inositol 2-amino-2-deoxy-alpha-D-glucopyranoside + L-cysteine + ATP = 1D-myo-inositol 2-(L-cysteinylamino)-2-deoxy-alpha-D-glucopyranoside + AMP + diphosphate + H(+). Catalyzes the ATP-dependent condensation of GlcN-Ins and L-cysteine to form L-Cys-GlcN-Ins. This is L-cysteine:1D-myo-inositol 2-amino-2-deoxy-alpha-D-glucopyranoside ligase from Salinispora arenicola (strain CNS-205).